The following is a 503-amino-acid chain: Arabinose import ATP-binding protein AraG 1 (503 aa).

ABC transporter domains follow at residues 5–240 and 251–497; these read LRFD…MVGR and RALG…LPQT. 37 to 44 lines the ATP pocket; the sequence is GENGAGKS.

The protein belongs to the ABC transporter superfamily. Arabinose importer (TC 3.A.1.2.2) family. As to quaternary structure, the complex is composed of two ATP-binding proteins (AraG), two transmembrane proteins (AraH) and a solute-binding protein (AraF).

It localises to the cell inner membrane. It catalyses the reaction L-arabinose(out) + ATP + H2O = L-arabinose(in) + ADP + phosphate + H(+). Its function is as follows. Part of the ABC transporter complex AraFGH involved in arabinose import. Responsible for energy coupling to the transport system. In Burkholderia lata (strain ATCC 17760 / DSM 23089 / LMG 22485 / NCIMB 9086 / R18194 / 383), this protein is Arabinose import ATP-binding protein AraG 1.